Consider the following 1188-residue polypeptide: Zinc finger SWIM domain-containing protein 5 (1188 aa).

Over residues 1-10 the composition is skewed to basic and acidic residues; sequence MAEGGEREEL. 2 disordered regions span residues 1-46 and 123-171; these read MAEG…GAGG and AGAA…TGTA. 2 stretches are compositionally biased toward low complexity: residues 126-136 and 146-155; these read AAGAAGASPVE and AAPAGSAPGA. The span at 156–171 shows a compositional bias: gly residues; it reads AGAGSSPGLGAGTGTA. Residues 222–259 form an SWIM-type zinc finger; the sequence is YKVAISFDRCKITSVSCGCGNKDIFYCAHVVALSLYRI.

The sequence is that of Zinc finger SWIM domain-containing protein 5 (Zswim5) from Mus musculus (Mouse).